Reading from the N-terminus, the 804-residue chain is Leucine--tRNA ligase (804 aa).

Positions 40-51 (PYPSGAGLHVGH) match the 'HIGH' region motif. The short motif at 576–580 (KMSKS) is the 'KMSKS' region element. K579 is an ATP binding site.

It belongs to the class-I aminoacyl-tRNA synthetase family.

It localises to the cytoplasm. It carries out the reaction tRNA(Leu) + L-leucine + ATP = L-leucyl-tRNA(Leu) + AMP + diphosphate. The sequence is that of Leucine--tRNA ligase from Bacillus licheniformis (strain ATCC 14580 / DSM 13 / JCM 2505 / CCUG 7422 / NBRC 12200 / NCIMB 9375 / NCTC 10341 / NRRL NRS-1264 / Gibson 46).